Consider the following 363-residue polypeptide: F-box protein At3g44326 (363 aa).

Positions 1–23 (MLSSSSSSTVEQPSRGGSPGINA) are disordered. The 40-residue stretch at 27 to 66 (DVLRSNILTRLDGSSLAALSCTCSNLNSFCSDESLWRQQC) folds into the F-box domain.

This chain is F-box protein At3g44326, found in Arabidopsis thaliana (Mouse-ear cress).